The following is a 40-amino-acid chain: Large ribosomal subunit protein bL36B (40 aa).

It belongs to the bacterial ribosomal protein bL36 family.

In Kocuria rhizophila (strain ATCC 9341 / DSM 348 / NBRC 103217 / DC2201), this protein is Large ribosomal subunit protein bL36B.